The sequence spans 839 residues: Periplasmic nitrate reductase (839 aa).

Positions 1 to 34 (MTLTRRDFIKANAAAAAATAAAVNLPLVPSMAQA) form a signal peptide, tat-type signal. One can recognise a 4Fe-4S Mo/W bis-MGD-type domain in the interval 46 to 102 (IKWDKAACRFCGTGCSVLVGTKGGRVVATQGDPDAPVNRGLNCIKGYFLSKIMYGED). [4Fe-4S] cluster-binding residues include C53, C56, C60, and C88. Residues K90, Q157, N182, C186, 219-226 (WGSNMAEM), 250-254 (STYEH), 269-271 (QTD), M379, Q383, N489, 515-516 (SD), K538, D565, and 729-738 (TGRVLEHWHT) each bind Mo-bis(molybdopterin guanine dinucleotide). F805 serves as a coordination point for substrate. Residues N813 and K830 each contribute to the Mo-bis(molybdopterin guanine dinucleotide) site.

Belongs to the prokaryotic molybdopterin-containing oxidoreductase family. NasA/NapA/NarB subfamily. As to quaternary structure, component of the periplasmic nitrate reductase NapAB complex composed of NapA and NapB. The cofactor is [4Fe-4S] cluster. Mo-bis(molybdopterin guanine dinucleotide) is required as a cofactor. In terms of processing, predicted to be exported by the Tat system. The position of the signal peptide cleavage has not been experimentally proven.

The protein resides in the periplasm. The enzyme catalyses 2 Fe(II)-[cytochrome] + nitrate + 2 H(+) = 2 Fe(III)-[cytochrome] + nitrite + H2O. Functionally, catalytic subunit of the periplasmic nitrate reductase complex NapAB. Receives electrons from NapB and catalyzes the reduction of nitrate to nitrite. The chain is Periplasmic nitrate reductase from Laribacter hongkongensis (strain HLHK9).